The primary structure comprises 20 residues: Hemocyanin subunit Ib (20 aa).

The segment at Asp1 to Lys20 is disordered.

This sequence belongs to the tyrosinase family. Hemocyanin subfamily. As to quaternary structure, composed of 3 major subunits (IB, II and III) and 1 minor subunit (IA) which form homohexamers and heterohexamers. May also form larger structures. In terms of tissue distribution, hemolymph.

The protein localises to the secreted. The protein resides in the extracellular space. In terms of biological role, hemocyanins are copper-containing oxygen carriers occurring freely dissolved in the hemolymph of many mollusks and arthropods. The chain is Hemocyanin subunit Ib from Panulirus japonicus (Japanese spiny lobster).